The primary structure comprises 997 residues: Protein translocase subunit SecA (997 aa).

ATP-binding positions include Gln-84, 102 to 106 (GEGKT), and Asp-582. Residues 950-997 (PYVPVPEAKPEPSEVFGVERKRATPPPQPGLSRAERRRLMRQEKKRKK) are disordered. Over residues 957–971 (AKPEPSEVFGVERKR) the composition is skewed to basic and acidic residues. A compositionally biased stretch (basic residues) spans 984–997 (ERRRLMRQEKKRKK).

Belongs to the SecA family. In terms of assembly, part of the essential Sec protein translocation apparatus which comprises SecA, SecYEG and auxiliary proteins SecDF. Other proteins may also be involved. Monomer and homodimer.

It is found in the cell inner membrane. The protein resides in the cytoplasm. The catalysed reaction is ATP + H2O + cellular proteinSide 1 = ADP + phosphate + cellular proteinSide 2.. In terms of biological role, part of the Sec protein translocase complex. Interacts with the SecYEG preprotein conducting channel. Has a central role in coupling the hydrolysis of ATP to the transfer of proteins into and across the cell membrane, serving as an ATP-driven molecular motor driving the stepwise translocation of polypeptide chains across the membrane. This is Protein translocase subunit SecA from Thermus thermophilus (strain ATCC 27634 / DSM 579 / HB8).